A 343-amino-acid chain; its full sequence is Phosphate acyltransferase (343 aa).

It belongs to the PlsX family. Homodimer. Probably interacts with PlsY.

The protein localises to the cytoplasm. It carries out the reaction a fatty acyl-[ACP] + phosphate = an acyl phosphate + holo-[ACP]. Its pathway is lipid metabolism; phospholipid metabolism. Functionally, catalyzes the reversible formation of acyl-phosphate (acyl-PO(4)) from acyl-[acyl-carrier-protein] (acyl-ACP). This enzyme utilizes acyl-ACP as fatty acyl donor, but not acyl-CoA. This Limosilactobacillus reuteri (strain DSM 20016) (Lactobacillus reuteri) protein is Phosphate acyltransferase.